A 429-amino-acid chain; its full sequence is Cholesterol 7-desaturase nvd (429 aa).

Residues 23–43 (FVICLWTLAVTFIRIYWIFFV) traverse the membrane as a helical segment. The 104-residue stretch at 98–201 (YGILKSSQLK…SQEVDGFIFI (104 aa)) folds into the Rieske domain. [2Fe-2S] cluster is bound by residues C138, H140, C158, and H161.

This sequence belongs to the cholesterol 7-desaturase family. [2Fe-2S] cluster is required as a cofactor. In terms of tissue distribution, expressed predominantly in the prothoracic gland and weakly in brain and malpighian tubules.

It is found in the membrane. The enzyme catalyses cholesterol + NADPH + O2 + H(+) = 7-dehydrocholesterol + NADP(+) + 2 H2O. It carries out the reaction cholesterol + NADH + O2 + H(+) = 7-dehydrocholesterol + NAD(+) + 2 H2O. Its pathway is steroid hormone biosynthesis; dafachronic acid biosynthesis. Catalyzes the production of 7-dehydrocholesterol (7-DHC or cholesta-5,7-dien-3beta-ol) by inserting a double bond (desaturating) at the C7-C8 single bond of cholesterol. Essential regulator of steroid biosynthesis, as this reaction is the first step in the synthesis of the steroid hormone Delta(7)-dafachronic acid. Required for insect molting, metamorphosis and body growth throughout development via the regulation of ecdysteroid biosynthesis in the prothoracic gland. This chain is Cholesterol 7-desaturase nvd, found in Drosophila melanogaster (Fruit fly).